We begin with the raw amino-acid sequence, 369 residues long: Anhydro-N-acetylmuramic acid kinase (369 aa).

ATP is bound at residue 12–19 (GTSLDGVD).

Belongs to the anhydro-N-acetylmuramic acid kinase family.

It carries out the reaction 1,6-anhydro-N-acetyl-beta-muramate + ATP + H2O = N-acetyl-D-muramate 6-phosphate + ADP + H(+). It participates in amino-sugar metabolism; 1,6-anhydro-N-acetylmuramate degradation. The protein operates within cell wall biogenesis; peptidoglycan recycling. Catalyzes the specific phosphorylation of 1,6-anhydro-N-acetylmuramic acid (anhMurNAc) with the simultaneous cleavage of the 1,6-anhydro ring, generating MurNAc-6-P. Is required for the utilization of anhMurNAc either imported from the medium or derived from its own cell wall murein, and thus plays a role in cell wall recycling. This Actinobacillus pleuropneumoniae serotype 5b (strain L20) protein is Anhydro-N-acetylmuramic acid kinase.